We begin with the raw amino-acid sequence, 772 residues long: UDP-N-acetylmuramoyl-L-alanyl-D-glutamate--2,6-diaminopimelate ligase MurE homolog, chloroplastic (772 aa).

A chloroplast-targeting transit peptide spans 1-40 (MAFTFLSPHPVFLSLTGTTSSFSYKPVLLPFSRNSRTLTV). Disordered stretches follow at residues 42-87 (AGPA…KLEE) and 141-168 (LLKPNPPKTASLKKIGEEGNEEEGDVTD). 2 stretches are compositionally biased toward acidic residues: residues 54–63 (ADDDPPEAPE) and 158–168 (EGNEEEGDVTD). Ser194 is modified (phosphoserine).

Belongs to the MurCDEF family. MurE subfamily. As to quaternary structure, component of the plastid-encoded plastid RNA polymerase (PEP) complex. As to expression, expressed in leaves and flowers.

It is found in the plastid. The protein resides in the chloroplast. Involved in chloroplast biogenesis. Required for thylakoid membrane development. Seems to be required for plastid-encoded plastid RNA polymerase (PEP)-dependent gene expression. This Arabidopsis thaliana (Mouse-ear cress) protein is UDP-N-acetylmuramoyl-L-alanyl-D-glutamate--2,6-diaminopimelate ligase MurE homolog, chloroplastic.